A 212-amino-acid chain; its full sequence is uncharacterized protein (212 aa).

Residues 11 to 31 (NLIFFQFIVYFFFISLTILII) traverse the membrane as a helical segment.

The protein localises to the membrane. This is an uncharacterized protein from Rickettsia prowazekii (strain Madrid E).